We begin with the raw amino-acid sequence, 385 residues long: Bifunctional chorismate mutase/prephenate dehydratase (385 aa).

The Chorismate mutase domain occupies 1–92 (MPSKNDLLSF…ESVLTQKKLL (92 aa)). Residues R11, R28, K39, D48, E52, S84, and Q88 each coordinate substrate. One can recognise a Prephenate dehydratase domain in the interval 105-285 (SFSFLGPKGS…NITRFILLSR (181 aa)). Residues 286 to 385 (KPVSISSKIP…PSENITPIIP (100 aa)) form a regulatory region. Positions 299–376 (TLIFNTGQES…KFIKILGCYP (78 aa)) constitute an ACT domain.

It localises to the cytoplasm. It catalyses the reaction chorismate = prephenate. The enzyme catalyses prephenate + H(+) = 3-phenylpyruvate + CO2 + H2O. It functions in the pathway amino-acid biosynthesis; L-phenylalanine biosynthesis; phenylpyruvate from prephenate: step 1/1. The protein operates within metabolic intermediate biosynthesis; prephenate biosynthesis; prephenate from chorismate: step 1/1. Functionally, catalyzes the Claisen rearrangement of chorismate to prephenate and the decarboxylation/dehydration of prephenate to phenylpyruvate. This chain is Bifunctional chorismate mutase/prephenate dehydratase (pheA), found in Buchnera aphidicola subsp. Schizaphis graminum (strain Sg).